The primary structure comprises 1004 residues: 2-oxoglutarate dehydrogenase E1 component (1004 aa).

It belongs to the alpha-ketoglutarate dehydrogenase family. As to quaternary structure, homodimer. Part of the 2-oxoglutarate dehydrogenase (OGDH) complex composed of E1 (2-oxoglutarate dehydrogenase), E2 (dihydrolipoamide succinyltransferase) and E3 (dihydrolipoamide dehydrogenase); the complex contains multiple copies of the three enzymatic components (E1, E2 and E3). Requires thiamine diphosphate as cofactor.

The catalysed reaction is N(6)-[(R)-lipoyl]-L-lysyl-[protein] + 2-oxoglutarate + H(+) = N(6)-[(R)-S(8)-succinyldihydrolipoyl]-L-lysyl-[protein] + CO2. In terms of biological role, E1 component of the 2-oxoglutarate dehydrogenase (OGDH) complex which catalyzes the decarboxylation of 2-oxoglutarate, the first step in the conversion of 2-oxoglutarate to succinyl-CoA and CO(2). The polypeptide is 2-oxoglutarate dehydrogenase E1 component (Brucella abortus (strain S19)).